Here is a 262-residue protein sequence, read N- to C-terminus: MFGQTTSEYISHHLSFLKTGDGFWNVHIDTLFFSILAAVIFLFVFSRVGKKATTGVPGKMQCLVEIVVEWVNGIVKENFHGPRNVVAPLALTIFCWVFIMNAIDLIPVDFLPQFAGLFGIHYLRAVPTADISATLGMSICVFFLILFYTIKSKGFKGLVKEYTLHPFNHWAFIPVNFILETVTLLAKPISLAFRLFGNMYAGELIFILIAVMYSANMAIAALGIPLHLAWAIFHILVITLQAFIFMMLTVVYLSIAYNKADH.

Helical transmembrane passes span 26 to 46, 86 to 106, 130 to 150, 204 to 226, and 240 to 260; these read VHID…FVFS, VAPL…IDLI, DISA…FYTI, LIFI…GIPL, and LQAF…YNKA.

Belongs to the ATPase A chain family. In terms of assembly, F-type ATPases have 2 components, CF(1) - the catalytic core - and CF(0) - the membrane proton channel. CF(1) has five subunits: alpha(3), beta(3), gamma(1), delta(1), epsilon(1). CF(0) has three main subunits: a(1), b(2) and c(9-12). The alpha and beta chains form an alternating ring which encloses part of the gamma chain. CF(1) is attached to CF(0) by a central stalk formed by the gamma and epsilon chains, while a peripheral stalk is formed by the delta and b chains.

It is found in the cell inner membrane. In terms of biological role, key component of the proton channel; it plays a direct role in the translocation of protons across the membrane. The polypeptide is ATP synthase subunit a (Haemophilus influenzae (strain PittEE)).